Consider the following 102-residue polypeptide: Small integral membrane protein 29 (102 aa).

Residue asparagine 3 is glycosylated (N-linked (GlcNAc...) asparagine). A helical transmembrane segment spans residues valine 21–valine 41.

In terms of tissue distribution, expressed in spleen, thymus, prostate, testis, uterus, small intestine, colon and peripheral blood leukocytes.

It localises to the membrane. The protein is Small integral membrane protein 29 of Homo sapiens (Human).